The primary structure comprises 814 residues: Microbial collagenase (814 aa).

Positions 1 to 21 are cleaved as a signal peptide; sequence MELKILSVAIATTLTSTGVFA. Positions 22-75 are excised as a propeptide; sequence LSEPVSQVTEQHAHSAHTHGVEFNRVEYQPTATLPIQPSKATRVQSLESLDESS. His-477 lines the Zn(2+) pocket. Glu-478 is a catalytic residue. His-481 is a binding site for Zn(2+). The 89-residue stretch at 609–697 folds into the PKD domain; the sequence is APNAVITANS…VVISALGGND (89 aa).

This sequence belongs to the peptidase M9A family. The cofactor is Zn(2+). In terms of processing, proteolytic cleavage might yield three different active forms.

The protein localises to the secreted. It carries out the reaction Digestion of native collagen in the triple helical region at Xaa-|-Gly bonds. With synthetic peptides, a preference is shown for Gly at P3 and P1', Pro and Ala at P2 and P2', and hydroxyproline, Ala or Arg at P3'.. This Vibrio alginolyticus protein is Microbial collagenase.